Consider the following 183-residue polypeptide: Heavy metal-associated isoprenylated plant protein 44 (183 aa).

The 64-residue stretch at 50 to 113 (LQTVELKVRM…AVRRAGKRAE (64 aa)) folds into the HMA domain. Residues Cys-61 and Cys-64 each coordinate a metal cation. Cys-180 bears the Cysteine methyl ester mark. Cys-180 is lipidated: S-farnesyl cysteine. A propeptide spans 181–183 (RLM) (removed in mature form).

It belongs to the HIPP family.

Functionally, heavy-metal-binding protein. The polypeptide is Heavy metal-associated isoprenylated plant protein 44 (Arabidopsis thaliana (Mouse-ear cress)).